A 588-amino-acid polypeptide reads, in one-letter code: Phosphoinositide phosphatase SAC8 (588 aa).

Residues 37–56 (FSVNRRDGNIKPLDENASSG) are disordered. Positions 40 to 50 (NRRDGNIKPLD) are enriched in basic and acidic residues. Positions 129–455 (LQALETTPGL…GDEVSLQYAG (327 aa)) constitute an SAC domain. Positions 390–401 (RSNCIDCLDRTN) match the Phosphatase catalytic core motif. 2 consecutive transmembrane segments (helical) span residues 524-544 (SFLP…SFTI) and 555-575 (LASA…KANG).

In terms of tissue distribution, ubiquitous with a higher level of expression in young seedlings than in other tissues.

Its subcellular location is the endoplasmic reticulum membrane. In terms of biological role, phosphoinositide phosphatase that hydrolyzes PtdIns(3)P and PtdIns(4)P. This Arabidopsis thaliana (Mouse-ear cress) protein is Phosphoinositide phosphatase SAC8 (SAC8).